Reading from the N-terminus, the 426-residue chain is Serine--tRNA ligase (426 aa).

L-serine is bound at residue 233 to 235; that stretch reads TAE. 264–266 contacts ATP; sequence RAE. Glu287 contributes to the L-serine binding site. 351 to 354 contributes to the ATP binding site; it reads EISS. Ser387 lines the L-serine pocket.

It belongs to the class-II aminoacyl-tRNA synthetase family. Type-1 seryl-tRNA synthetase subfamily. Homodimer. The tRNA molecule binds across the dimer.

It localises to the cytoplasm. It catalyses the reaction tRNA(Ser) + L-serine + ATP = L-seryl-tRNA(Ser) + AMP + diphosphate + H(+). The enzyme catalyses tRNA(Sec) + L-serine + ATP = L-seryl-tRNA(Sec) + AMP + diphosphate + H(+). It functions in the pathway aminoacyl-tRNA biosynthesis; selenocysteinyl-tRNA(Sec) biosynthesis; L-seryl-tRNA(Sec) from L-serine and tRNA(Sec): step 1/1. In terms of biological role, catalyzes the attachment of serine to tRNA(Ser). Is also able to aminoacylate tRNA(Sec) with serine, to form the misacylated tRNA L-seryl-tRNA(Sec), which will be further converted into selenocysteinyl-tRNA(Sec). This chain is Serine--tRNA ligase, found in Clostridium kluyveri (strain NBRC 12016).